We begin with the raw amino-acid sequence, 352 residues long: 3-isopropylmalate dehydrogenase (352 aa).

The substrate site is built by Arg-96, Arg-106, Arg-134, and Asp-220. Positions 220, 244, and 248 each coordinate Mg(2+). 277-289 is an NAD(+) binding site; it reads GSAPDIAGKNLAN.

This sequence belongs to the isocitrate and isopropylmalate dehydrogenases family. LeuB type 1 subfamily. In terms of assembly, homodimer. Mg(2+) serves as cofactor. It depends on Mn(2+) as a cofactor.

The protein localises to the cytoplasm. It carries out the reaction (2R,3S)-3-isopropylmalate + NAD(+) = 4-methyl-2-oxopentanoate + CO2 + NADH. Its pathway is amino-acid biosynthesis; L-leucine biosynthesis; L-leucine from 3-methyl-2-oxobutanoate: step 3/4. Catalyzes the oxidation of 3-carboxy-2-hydroxy-4-methylpentanoate (3-isopropylmalate) to 3-carboxy-4-methyl-2-oxopentanoate. The product decarboxylates to 4-methyl-2 oxopentanoate. This chain is 3-isopropylmalate dehydrogenase, found in Desulfitobacterium hafniense (strain Y51).